Consider the following 144-residue polypeptide: Peroxisome assembly protein 22 (144 aa).

A helical transmembrane segment spans residues 13 to 35 (YGAVSLASLLVAASIVAYRWWNA).

It belongs to the peroxin-22 family.

It is found in the peroxisome membrane. Involved in peroxisome biogenesis. The protein is Peroxisome assembly protein 22 (PEX22) of Eremothecium gossypii (strain ATCC 10895 / CBS 109.51 / FGSC 9923 / NRRL Y-1056) (Yeast).